We begin with the raw amino-acid sequence, 694 residues long: ATP-binding cassette sub-family G member 8 (694 aa).

Residues 1–437 (MAEKTKEETQ…ISNDFRDLPT (437 aa)) are Cytoplasmic-facing. One can recognise an ABC transporter domain in the interval 91–335 (AQFKLPWRSR…FTSIGYPCPR (245 aa)). An ABC transmembrane type-2 domain is found at 436 to 684 (PTLFIHGAEA…FLSLYYLSLK (249 aa)). Residues 438–458 (LFIHGAEACLMSLIIGFLYYG) traverse the membrane as a helical segment. Topologically, residues 459-468 (HADKPLSFMD) are extracellular. A helical transmembrane segment spans residues 469–489 (MAALLFMIGALIPFNVILDVV). Residues 490–518 (SKCHSERSLLYYELEDGLYTAGPYFFAKV) lie on the Cytoplasmic side of the membrane. A helical membrane pass occupies residues 519 to 539 (LGELPEHCAYVIIYGMPIYWL). Residues 540–548 (TNLRPGPEL) lie on the Extracellular side of the membrane. Residues 549–569 (FLLHFMLLWLVVFCCRTMALA) form a helical membrane-spanning segment. Over 570-576 (ASAMLPT) the chain is Cytoplasmic. Residues 577-597 (FHMSSFCCNALYNSFYLTAGF) form a helical membrane-spanning segment. The Extracellular portion of the chain corresponds to 598–660 (MINLNNLWIV…VTAMDLNSHP (63 aa)). Asn640 carries N-linked (GlcNAc...) asparagine glycosylation. A helical transmembrane segment spans residues 661 to 681 (LYAIYLIVIGISCGFLSLYYL). At 682–694 (SLKFIKQKSIQDW) the chain is on the cytoplasmic side.

Belongs to the ABC transporter superfamily. ABCG family. Eye pigment precursor importer (TC 3.A.1.204) subfamily. Heterodimer with ABCG8. Requires Mg(2+) as cofactor. N-glycosylated. N-glycosylation is important for efficient export out of the endoplasmic reticulum. As to expression, highest expression in liver, with lower levels in small intestine and colon.

The protein resides in the cell membrane. It is found in the apical cell membrane. The catalysed reaction is cholesterol(in) + ATP + H2O = cholesterol(out) + ADP + phosphate + H(+). It carries out the reaction sitosterol(in) + ATP + H2O = sitosterol(out) + ADP + phosphate + H(+). ABCG5 and ABCG8 form an obligate heterodimer that mediates Mg(2+)- and ATP-dependent sterol transport across the cell membrane. Plays an essential role in the selective transport of the dietary cholesterol in and out of the enterocytes and in the selective sterol excretion by the liver into bile. Required for normal sterol homeostasis. The heterodimer with ABCG5 has ATPase activity. This is ATP-binding cassette sub-family G member 8 from Rattus norvegicus (Rat).